The primary structure comprises 376 residues: Queuine tRNA-ribosyltransferase (376 aa).

The Proton acceptor role is filled by D89. Substrate contacts are provided by residues 89-93, D143, Q194, and G221; that span reads DSGGF. Positions 252-258 are RNA binding; sequence GVGIPSN. Catalysis depends on D271, which acts as the Nucleophile. The RNA binding; important for wobble base 34 recognition stretch occupies residues 276 to 280; sequence ARNGR. 4 residues coordinate Zn(2+): C309, C311, C314, and H340.

This sequence belongs to the queuine tRNA-ribosyltransferase family. As to quaternary structure, homodimer. Within each dimer, one monomer is responsible for RNA recognition and catalysis, while the other monomer binds to the replacement base PreQ1. Requires Zn(2+) as cofactor.

It catalyses the reaction 7-aminomethyl-7-carbaguanine + guanosine(34) in tRNA = 7-aminomethyl-7-carbaguanosine(34) in tRNA + guanine. The protein operates within tRNA modification; tRNA-queuosine biosynthesis. In terms of biological role, catalyzes the base-exchange of a guanine (G) residue with the queuine precursor 7-aminomethyl-7-deazaguanine (PreQ1) at position 34 (anticodon wobble position) in tRNAs with GU(N) anticodons (tRNA-Asp, -Asn, -His and -Tyr). Catalysis occurs through a double-displacement mechanism. The nucleophile active site attacks the C1' of nucleotide 34 to detach the guanine base from the RNA, forming a covalent enzyme-RNA intermediate. The proton acceptor active site deprotonates the incoming PreQ1, allowing a nucleophilic attack on the C1' of the ribose to form the product. After dissociation, two additional enzymatic reactions on the tRNA convert PreQ1 to queuine (Q), resulting in the hypermodified nucleoside queuosine (7-(((4,5-cis-dihydroxy-2-cyclopenten-1-yl)amino)methyl)-7-deazaguanosine). This chain is Queuine tRNA-ribosyltransferase, found in Clostridium botulinum (strain Okra / Type B1).